A 558-amino-acid chain; its full sequence is Putative ABC transporter ATP-binding protein SAG1633 (558 aa).

ABC transporter domains lie at 5–246 (IEWK…GIRE) and 295–527 (LSVQ…THLK). ATP contacts are provided by residues 39 to 46 (GPSGSGKS) and 328 to 335 (GKNGAGKS).

Belongs to the ABC transporter superfamily.

Its subcellular location is the cell membrane. Its function is as follows. Probably part of an ABC transporter complex. Responsible for energy coupling to the transport system. The sequence is that of Putative ABC transporter ATP-binding protein SAG1633 from Streptococcus agalactiae serotype V (strain ATCC BAA-611 / 2603 V/R).